Here is a 78-residue protein sequence, read N- to C-terminus: D-alanyl carrier protein (78 aa).

In terms of domain architecture, Carrier spans 1 to 78 (MDFNQEVLSV…QIIKQLNELR (78 aa)). Residue serine 36 is modified to O-(pantetheine 4'-phosphoryl)serine.

The protein belongs to the DltC family. Post-translationally, 4'-phosphopantetheine is transferred from CoA to a specific serine of apo-DCP.

It is found in the cytoplasm. It participates in cell wall biogenesis; lipoteichoic acid biosynthesis. Functionally, carrier protein involved in the D-alanylation of lipoteichoic acid (LTA). The loading of thioester-linked D-alanine onto DltC is catalyzed by D-alanine--D-alanyl carrier protein ligase DltA. The DltC-carried D-alanyl group is further transferred to cell membrane phosphatidylglycerol (PG) by forming an ester bond, probably catalyzed by DltD. D-alanylation of LTA plays an important role in modulating the properties of the cell wall in Gram-positive bacteria, influencing the net charge of the cell wall. This chain is D-alanyl carrier protein, found in Bacillus licheniformis (strain ATCC 14580 / DSM 13 / JCM 2505 / CCUG 7422 / NBRC 12200 / NCIMB 9375 / NCTC 10341 / NRRL NRS-1264 / Gibson 46).